Consider the following 351-residue polypeptide: Serine/threonine-protein kinase ZRK1 (351 aa).

In terms of domain architecture, Protein kinase spans 60-347 (FDSSCFVSQD…KELKQIEASL (288 aa)). Residues 66–74 (VSQDVYYKW) and Lys-87 contribute to the ATP site. The Proton acceptor role is filled by Asp-191.

Belongs to the protein kinase superfamily. Ser/Thr protein kinase family. ZRK subfamily. In terms of assembly, component of a stable high-order oligomeric complex made of RKS1 and RPP13L4/ZAR1 which recruits Xanthomonas campestris effector XopAC/AvrAC-mediated uridylylated PBL2 in the presence of ATP to form a wheel-like pentameric resistosome; this complex triggers immunity toward X.campestris in vascular tissues. Interacts with RPP13L4/ZAR1 and uridylylated PBL2. In terms of tissue distribution, expressed at high levels in germinating seeds and at lower levels in adult leaves.

It catalyses the reaction L-seryl-[protein] + ATP = O-phospho-L-seryl-[protein] + ADP + H(+). It carries out the reaction L-threonyl-[protein] + ATP = O-phospho-L-threonyl-[protein] + ADP + H(+). Functionally, serine/threonine-protein kinase that confers a broad-spectrum quantitative disease resistance (QDR) to the pathogenic biotrophic bacteria Xanthomonas campestris (e.g. pv. campestris (Xcc), pv. raphani, pv. armoriaceae and pv. incanae) by restricting bacterial spread to the vascular system from the infection site; X.campestris causes black rot disease in crops. Seems to not have any kinase activity. The protein is Serine/threonine-protein kinase ZRK1 of Arabidopsis thaliana (Mouse-ear cress).